The primary structure comprises 747 residues: Protein tyrosine phosphatase domain-containing protein 1 (747 aa).

Positions 1–36 (MAAGVLPQNEDPYSTLVNSSGHAAHMDENSGRPAPK) are disordered. The segment covering 11-21 (DPYSTLVNSSG) has biased composition (polar residues). Residues 82–253 (YSSWVTDNIL…LAPLRNIFSC (172 aa)) form the Tyrosine-protein phosphatase domain. Cysteine 190 serves as the catalytic Phosphocysteine intermediate. A phosphoserine mark is found at serine 392, serine 394, and serine 543. The segment at 549–570 (SSPKAQFPHGQETQDSTDLSEA) is disordered.

Belongs to the protein-tyrosine phosphatase family. Non-receptor class PTPDC1 subfamily.

Functionally, may play roles in cilia formation and/or maintenance. This Mus musculus (Mouse) protein is Protein tyrosine phosphatase domain-containing protein 1 (Ptpdc1).